The sequence spans 405 residues: Probable tRNA sulfurtransferase (405 aa).

Residues Asp-60 to Leu-165 form the THUMP domain. ATP-binding positions include Met-183 to Leu-184, His-208 to Phe-209, Arg-265, Gly-287, and Gln-296.

Belongs to the ThiI family.

It localises to the cytoplasm. It carries out the reaction [ThiI sulfur-carrier protein]-S-sulfanyl-L-cysteine + a uridine in tRNA + 2 reduced [2Fe-2S]-[ferredoxin] + ATP + H(+) = [ThiI sulfur-carrier protein]-L-cysteine + a 4-thiouridine in tRNA + 2 oxidized [2Fe-2S]-[ferredoxin] + AMP + diphosphate. The enzyme catalyses [ThiS sulfur-carrier protein]-C-terminal Gly-Gly-AMP + S-sulfanyl-L-cysteinyl-[cysteine desulfurase] + AH2 = [ThiS sulfur-carrier protein]-C-terminal-Gly-aminoethanethioate + L-cysteinyl-[cysteine desulfurase] + A + AMP + 2 H(+). Its pathway is cofactor biosynthesis; thiamine diphosphate biosynthesis. Its function is as follows. Catalyzes the ATP-dependent transfer of a sulfur to tRNA to produce 4-thiouridine in position 8 of tRNAs, which functions as a near-UV photosensor. Also catalyzes the transfer of sulfur to the sulfur carrier protein ThiS, forming ThiS-thiocarboxylate. This is a step in the synthesis of thiazole, in the thiamine biosynthesis pathway. The sulfur is donated as persulfide by IscS. The chain is Probable tRNA sulfurtransferase from Lactobacillus gasseri (strain ATCC 33323 / DSM 20243 / BCRC 14619 / CIP 102991 / JCM 1131 / KCTC 3163 / NCIMB 11718 / NCTC 13722 / AM63).